The following is a 489-amino-acid chain: Putative ABC transporter ATP-binding protein TDE_0282 (489 aa).

ABC transporter domains are found at residues 2 to 241 (ITLR…SMKL) and 269 to 487 (FAVK…MQLE). ATP is bound by residues 36–43 (GASGCGKT) and 301–308 (GENGAGKT).

Belongs to the ABC transporter superfamily.

Its subcellular location is the cell inner membrane. In terms of biological role, probably part of an ABC transporter complex. Responsible for energy coupling to the transport system. The protein is Putative ABC transporter ATP-binding protein TDE_0282 of Treponema denticola (strain ATCC 35405 / DSM 14222 / CIP 103919 / JCM 8153 / KCTC 15104).